The primary structure comprises 476 residues: Aspartyl/glutamyl-tRNA(Asn/Gln) amidotransferase subunit B (476 aa).

The protein belongs to the GatB/GatE family. GatB subfamily. As to quaternary structure, heterotrimer of A, B and C subunits.

The enzyme catalyses L-glutamyl-tRNA(Gln) + L-glutamine + ATP + H2O = L-glutaminyl-tRNA(Gln) + L-glutamate + ADP + phosphate + H(+). It carries out the reaction L-aspartyl-tRNA(Asn) + L-glutamine + ATP + H2O = L-asparaginyl-tRNA(Asn) + L-glutamate + ADP + phosphate + 2 H(+). Its function is as follows. Allows the formation of correctly charged Asn-tRNA(Asn) or Gln-tRNA(Gln) through the transamidation of misacylated Asp-tRNA(Asn) or Glu-tRNA(Gln) in organisms which lack either or both of asparaginyl-tRNA or glutaminyl-tRNA synthetases. The reaction takes place in the presence of glutamine and ATP through an activated phospho-Asp-tRNA(Asn) or phospho-Glu-tRNA(Gln). This chain is Aspartyl/glutamyl-tRNA(Asn/Gln) amidotransferase subunit B, found in Geobacillus kaustophilus (strain HTA426).